The primary structure comprises 104 residues: Pterin-4-alpha-carbinolamine dehydratase (104 aa).

Ala2 is subject to N-acetylalanine. Residues 61 to 63 and 78 to 81 each bind substrate; these read DHH and STHE.

The protein belongs to the pterin-4-alpha-carbinolamine dehydratase family. In terms of assembly, homotetramer and homodimer. Heterotetramer with HNF1A; formed by a dimer of dimers. Interacts with HNF1B (via HNF-p1 domain); the interaction increases HNF1B transactivation activity.

It localises to the cytoplasm. Its subcellular location is the nucleus. It catalyses the reaction (4aS,6R)-4a-hydroxy-L-erythro-5,6,7,8-tetrahydrobiopterin = (6R)-L-erythro-6,7-dihydrobiopterin + H2O. In terms of biological role, involved in tetrahydrobiopterin biosynthesis. Seems to both prevent the formation of 7-pterins and accelerate the formation of quinonoid-BH2. Coactivator for HNF1A-dependent transcription. Regulates the dimerization of homeodomain protein HNF1A and enhances its transcriptional activity. Also acts as a coactivator for HNF1B-dependent transcription. The polypeptide is Pterin-4-alpha-carbinolamine dehydratase (PCBD1) (Bos taurus (Bovine)).